Here is a 1758-residue protein sequence, read N- to C-terminus: Y' element ATP-dependent helicase YJL225C (1758 aa).

The Helicase ATP-binding domain occupies 668–845 (EIYMADTPSV…LQRIGLTGLA (178 aa)). 681–688 (APPGYGKT) provides a ligand contact to ATP. The 152-residue stretch at 900 to 1051 (ALKLLLALFE…EFYGLESKKG (152 aa)) folds into the Helicase C-terminal domain. Residues 1142–1360 (NVRTNATTNA…ATTTESTNAS (219 aa)) are compositionally biased toward low complexity. The segment at 1142–1384 (NVRTNATTNA…RFHPVTDINK (243 aa)) is disordered. Over residues 1361-1384 (AKEDANKDGNAEDNRFHPVTDINK) the composition is skewed to basic and acidic residues.

The protein belongs to the helicase family. Yeast subtelomeric Y' repeat subfamily.

Catalyzes DNA unwinding and is involved in telomerase-independent telomere maintenance. In Saccharomyces cerevisiae (strain ATCC 204508 / S288c) (Baker's yeast), this protein is Y' element ATP-dependent helicase YJL225C.